Here is a 261-residue protein sequence, read N- to C-terminus: Flagellar L-ring protein (261 aa).

The signal sequence occupies residues 1–18 (MAAMKRLLASSLLILLSG). Cysteine 19 carries N-palmitoyl cysteine lipidation. Cysteine 19 carries the S-diacylglycerol cysteine lipid modification. The segment at 37–67 (TVDAVEGDKSESNSGLTDALRNRTDPVAGDP) is disordered.

Belongs to the FlgH family. As to quaternary structure, the basal body constitutes a major portion of the flagellar organelle and consists of four rings (L,P,S, and M) mounted on a central rod.

It localises to the cell outer membrane. It is found in the bacterial flagellum basal body. In terms of biological role, assembles around the rod to form the L-ring and probably protects the motor/basal body from shearing forces during rotation. This chain is Flagellar L-ring protein, found in Vibrio cholerae serotype O1 (strain ATCC 39541 / Classical Ogawa 395 / O395).